An 85-amino-acid chain; its full sequence is Small ribosomal subunit protein uS17 (85 aa).

Belongs to the universal ribosomal protein uS17 family. As to quaternary structure, part of the 30S ribosomal subunit.

In terms of biological role, one of the primary rRNA binding proteins, it binds specifically to the 5'-end of 16S ribosomal RNA. In Rhodospirillum centenum (strain ATCC 51521 / SW), this protein is Small ribosomal subunit protein uS17.